The primary structure comprises 516 residues: Glucose-6-phosphate 1-dehydrogenase 5, cytoplasmic (516 aa).

Residues 38–45 (GASGDLAK), R73, Y156, and K183 contribute to the NADP(+) site. D-glucose 6-phosphate is bound by residues K183, 213–217 (HYLGK), E251, and D270. The active-site Proton acceptor is the H275. K358 lines the NADP(+) pocket. D-glucose 6-phosphate is bound by residues K361 and K366. NADP(+) is bound by residues K367, R371, and R395. Q397 contributes to the D-glucose 6-phosphate binding site. Residues 403–405 (YMK), 423–425 (DLS), R489, and W511 contribute to the NADP(+) site.

Belongs to the glucose-6-phosphate dehydrogenase family. Forms homodimer. As to expression, expressed in leaves and stems.

It localises to the cytoplasm. It is found in the cytosol. It catalyses the reaction D-glucose 6-phosphate + NADP(+) = 6-phospho-D-glucono-1,5-lactone + NADPH + H(+). The protein operates within carbohydrate degradation; pentose phosphate pathway; D-ribulose 5-phosphate from D-glucose 6-phosphate (oxidative stage): step 1/3. Its activity is regulated as follows. Regulated by metabolites. Functionally, catalyzes the rate-limiting step of the oxidative pentose-phosphate pathway, which represents a route for the dissimilation of carbohydrates besides glycolysis. The main function of this enzyme is to provide reducing power (NADPH) and pentose phosphates for fatty acid and nucleic acid synthesis which are involved in membrane synthesis and cell division. This is Glucose-6-phosphate 1-dehydrogenase 5, cytoplasmic from Arabidopsis thaliana (Mouse-ear cress).